Reading from the N-terminus, the 159-residue chain is ATP synthase subunit b (159 aa).

A helical membrane pass occupies residues 2 to 22 (NISIPQIIAAILNFIILLLIV).

Belongs to the ATPase B chain family. In terms of assembly, F-type ATPases have 2 components, F(1) - the catalytic core - and F(0) - the membrane proton channel. F(1) has five subunits: alpha(3), beta(3), gamma(1), delta(1), epsilon(1). F(0) has three main subunits: a(1), b(2) and c(10-14). The alpha and beta chains form an alternating ring which encloses part of the gamma chain. F(1) is attached to F(0) by a central stalk formed by the gamma and epsilon chains, while a peripheral stalk is formed by the delta and b chains.

It is found in the cell membrane. In terms of biological role, f(1)F(0) ATP synthase produces ATP from ADP in the presence of a proton or sodium gradient. F-type ATPases consist of two structural domains, F(1) containing the extramembraneous catalytic core and F(0) containing the membrane proton channel, linked together by a central stalk and a peripheral stalk. During catalysis, ATP synthesis in the catalytic domain of F(1) is coupled via a rotary mechanism of the central stalk subunits to proton translocation. Component of the F(0) channel, it forms part of the peripheral stalk, linking F(1) to F(0). The polypeptide is ATP synthase subunit b (Clostridium botulinum (strain ATCC 19397 / Type A)).